Reading from the N-terminus, the 389-residue chain is 23S rRNA (uracil(747)-C(5))-methyltransferase RlmC (389 aa).

[4Fe-4S] cluster is bound by residues cysteine 12, cysteine 20, cysteine 23, and cysteine 99. S-adenosyl-L-methionine-binding residues include glutamine 224, phenylalanine 253, glutamate 274, and asparagine 321. Cysteine 348 acts as the Nucleophile in catalysis.

This sequence belongs to the class I-like SAM-binding methyltransferase superfamily. RNA M5U methyltransferase family. RlmC subfamily.

The catalysed reaction is uridine(747) in 23S rRNA + S-adenosyl-L-methionine = 5-methyluridine(747) in 23S rRNA + S-adenosyl-L-homocysteine + H(+). Its function is as follows. Catalyzes the formation of 5-methyl-uridine at position 747 (m5U747) in 23S rRNA. This is 23S rRNA (uracil(747)-C(5))-methyltransferase RlmC from Shewanella putrefaciens (strain CN-32 / ATCC BAA-453).